We begin with the raw amino-acid sequence, 423 residues long: Core protease OPG083 (423 aa).

Catalysis depends on residues histidine 241, aspartate 248, and cysteine 328.

It belongs to the peptidase C57 family.

Its subcellular location is the virion. Functionally, late protein responsible for processing most or all of the viral core and membrane proteins known to undergo morphogenesis-associated proteolysis. These proteolytic events are involved in the transformation of immature virions (IV) into mature virions (MV). Probably cleaves at least the OPG129/A3, OPG136/A10, OPG098/L4, and OPG144/A17 precursors preferentially at Ala-Gly-|-Ala motifs. Also seems to process Ala-Gly-|-Ser and Ala-Gly-|-Thr motifs. The chain is Core protease OPG083 (OPG083) from Bos taurus (Bovine).